The following is a 241-amino-acid chain: Eukaryotic translation initiation factor 3 subunit J (241 aa).

Over residues 1 to 27 the composition is skewed to basic and acidic residues; that stretch reads MEEDWEQHGEKEEVPLPAKKPDANKWD. The disordered stretch occupies residues 1 to 99; that stretch reads MEEDWEQHGE…ENMTPEQKLA (99 aa). The segment covering 28-45 has biased composition (acidic residues); that stretch reads GEDEEEEVKDSWEDEDEL. Residues 31–119 adopt a coiled-coil conformation; sequence EEEEVKDSWE…ESDLKNALDT (89 aa). 2 stretches are compositionally biased toward basic and acidic residues: residues 46–58 and 69–90; these read EEKK…ETPK and IVEK…KEAE.

Belongs to the eIF-3 subunit J family. As to quaternary structure, component of the eukaryotic translation initiation factor 3 (eIF-3) complex.

It localises to the cytoplasm. Its function is as follows. Component of the eukaryotic translation initiation factor 3 (eIF-3) complex, which is involved in protein synthesis of a specialized repertoire of mRNAs and, together with other initiation factors, stimulates binding of mRNA and methionyl-tRNAi to the 40S ribosome. The eIF-3 complex specifically targets and initiates translation of a subset of mRNAs involved in cell proliferation. In Culex quinquefasciatus (Southern house mosquito), this protein is Eukaryotic translation initiation factor 3 subunit J.